Consider the following 256-residue polypeptide: uncharacterized protein (256 aa).

This sequence belongs to the methyltransferase superfamily.

It is found in the cytoplasm. The protein localises to the nucleus. Functionally, probable methyltransferase. This is an uncharacterized protein from Schizosaccharomyces pombe (strain 972 / ATCC 24843) (Fission yeast).